Consider the following 132-residue polypeptide: NADH-quinone oxidoreductase subunit A 2 (132 aa).

3 consecutive transmembrane segments (helical) span residues 9–29, 66–86, and 93–113; these read AWAF…MLGL, LVAM…LWAV, and WAGF…LFYL.

It belongs to the complex I subunit 3 family. In terms of assembly, NDH-1 is composed of 13 different subunits. Subunits NuoA, H, J, K, L, M, N constitute the membrane sector of the complex.

Its subcellular location is the cell inner membrane. The catalysed reaction is a quinone + NADH + 5 H(+)(in) = a quinol + NAD(+) + 4 H(+)(out). NDH-1 shuttles electrons from NADH, via FMN and iron-sulfur (Fe-S) centers, to quinones in the respiratory chain. The immediate electron acceptor for the enzyme in this species is believed to be ubiquinone. Couples the redox reaction to proton translocation (for every two electrons transferred, four hydrogen ions are translocated across the cytoplasmic membrane), and thus conserves the redox energy in a proton gradient. In Pseudomonas paraeruginosa (strain DSM 24068 / PA7) (Pseudomonas aeruginosa (strain PA7)), this protein is NADH-quinone oxidoreductase subunit A 2.